The chain runs to 95 residues: Protein TusB (95 aa).

The protein belongs to the DsrH/TusB family. In terms of assembly, heterohexamer, formed by a dimer of trimers. The hexameric TusBCD complex contains 2 copies each of TusB, TusC and TusD. The TusBCD complex interacts with TusE.

It is found in the cytoplasm. In terms of biological role, part of a sulfur-relay system required for 2-thiolation of 5-methylaminomethyl-2-thiouridine (mnm(5)s(2)U) at tRNA wobble positions. This is Protein TusB from Buchnera aphidicola subsp. Acyrthosiphon pisum (strain 5A).